We begin with the raw amino-acid sequence, 146 residues long: uncharacterized protein (146 aa).

A helical transmembrane segment spans residues F7 to N27.

Belongs to the asfivirus E146L family.

It localises to the host membrane. The protein localises to the virion. This is an uncharacterized protein from Ornithodoros (relapsing fever ticks).